Consider the following 310-residue polypeptide: 4-hydroxyproline epimerase (310 aa).

The active-site Proton acceptor is cysteine 88. Residues 89 to 90, histidine 208, and aspartate 232 each bind substrate; that span reads GH. Cysteine 236 acts as the Proton donor in catalysis. Substrate is bound at residue 237–238; sequence GT.

It belongs to the proline racemase family. As to quaternary structure, homodimer.

The enzyme catalyses trans-4-hydroxy-L-proline = cis-4-hydroxy-D-proline. Functionally, allows intracellular utilization of 4-hydroxyproline, one of the major constituents of host collagen, by converting 4-hydroxy-L-proline to 4-hydroxy-D-proline, which can be further metabolized by intracellular 4-hydroxy-D-proline oxidases. This is 4-hydroxyproline epimerase from Burkholderia cenocepacia (strain HI2424).